A 398-amino-acid chain; its full sequence is Succinate--CoA ligase [ADP-forming] subunit beta (398 aa).

The ATP-grasp domain occupies 9 to 254; it reads KRLLHEYGAP…ISEEDPKEIE (246 aa). Residues lysine 46, 53 to 55, glutamate 109, alanine 112, and glutamate 117 contribute to the ATP site; that span reads GRG. Residues asparagine 209 and aspartate 223 each coordinate Mg(2+). Residues asparagine 274 and 331 to 333 each bind substrate; that span reads GIM.

This sequence belongs to the succinate/malate CoA ligase beta subunit family. In terms of assembly, heterotetramer of two alpha and two beta subunits. It depends on Mg(2+) as a cofactor.

It carries out the reaction succinate + ATP + CoA = succinyl-CoA + ADP + phosphate. It catalyses the reaction GTP + succinate + CoA = succinyl-CoA + GDP + phosphate. It participates in carbohydrate metabolism; tricarboxylic acid cycle; succinate from succinyl-CoA (ligase route): step 1/1. Succinyl-CoA synthetase functions in the citric acid cycle (TCA), coupling the hydrolysis of succinyl-CoA to the synthesis of either ATP or GTP and thus represents the only step of substrate-level phosphorylation in the TCA. The beta subunit provides nucleotide specificity of the enzyme and binds the substrate succinate, while the binding sites for coenzyme A and phosphate are found in the alpha subunit. The polypeptide is Succinate--CoA ligase [ADP-forming] subunit beta (Bartonella bacilliformis (strain ATCC 35685 / KC583 / Herrer 020/F12,63)).